A 547-amino-acid chain; its full sequence is MAKMIAFDEEARRGLEKGLNTLADAVKVTLGPKGRNVVLERKWGAPTITNDGVTIAREIELEDPYEKIGAELVKEVAKKTDDVAGDGTTTATVLAQSLVREGLRNVAAGSNPMGIKRGIQAGVEKITAELLSHAKEIETQEQIAATAGISAADEKIGELIAEAMYKVGDGKLNKDGVITVEESNAFGVNLEVTEGMRFDKGYISGYFATDVERGEAVLEDPYILLVSSKISNVKDLLPLLEKVMQSGKPLLIVAEDIEGEALSTLVVNKIRGTFKSVAVKAPGFGDRRKAQLQDIAILTGGQVIAEEVGLSLETADLPMLGTARKVVVTKDDTTIVDGAGSAEQLAGRIKQIRQEIENADSDYDAEKLQERLAKLSGGVAVLQVGAATEVELKERKHRIEDAVRNAKAAAEEGIVAGGGAALLQTASVLDDNLGLEGDEATGVQIVRAALAAPLKQIAHNAGLEPGVVVDKVANLPVGEGLNAATGEYVDLLGAGISDPVKVTRSALQNAASIAALFLTTEAVVADKPEPEAPAMPGADEMGGMGGF.

Residues Thr29 to Pro32, Asp86 to Thr90, Gly418, Asn482 to Ala484, and Asp498 contribute to the ATP site.

Belongs to the chaperonin (HSP60) family. In terms of assembly, forms a cylinder of 14 subunits composed of two heptameric rings stacked back-to-back. Interacts with the co-chaperonin GroES.

The protein localises to the cytoplasm. It catalyses the reaction ATP + H2O + a folded polypeptide = ADP + phosphate + an unfolded polypeptide.. Its function is as follows. Together with its co-chaperonin GroES, plays an essential role in assisting protein folding. The GroEL-GroES system forms a nano-cage that allows encapsulation of the non-native substrate proteins and provides a physical environment optimized to promote and accelerate protein folding. The protein is Chaperonin GroEL 1 of Corynebacterium jeikeium (strain K411).